The sequence spans 261 residues: Calbindin (261 aa).

A2 bears the N-acetylalanine mark. The tract at residues 2 to 7 (AESHLQ) is interaction with RANBP9. EF-hand domains lie at 11-46 (ITASQFFEIWLHFDADGSGYLEGKELQNLIQELLQA), 53-88 (ELSPEMKSFVDQYGQRDDGKIGIVELAHVLPTEENF), 98-133 (KSCEEFMKTWRKYDTDHSGFIETEELKNFLKDLLEK), 142-177 (KLAEYTDLMLKLFDSNNDGKLELTEMARLLPVQENF), and 186-221 (MCGKEFNKAFELYDQDGNGYIDENELDALLKDLCEK). 5 residues coordinate Ca(2+): D24, D26, S28, Y30, and E35. Ca(2+) contacts are provided by D111, D113, S115, E122, D155, N157, D159, K161, E166, D199, D201, N203, Y205, and E210.

This sequence belongs to the calbindin family. As to quaternary structure, interacts with RANBP9. In terms of tissue distribution, expressed in the modiolar nerve root and in bushy neurons in the ventral cochlear nucleus (at protein level).

Buffers cytosolic calcium. May stimulate a membrane Ca(2+)-ATPase and a 3',5'-cyclic nucleotide phosphodiesterase. The polypeptide is Calbindin (Calb1) (Mus musculus (Mouse)).